We begin with the raw amino-acid sequence, 462 residues long: BBSome complex member bbs-4 (462 aa).

The segment at 1–46 (MEASNQDEIIGTDVIPNEQDNPEEVVPEPTSLDVPPPPPERAPSAP) is disordered. TPR repeat units follow at residues 89–122 (EAAF…SGKN), 124–156 (RYFY…MKDN), 199–232 (ATLI…QPDN), 234–266 (EVMN…DPAN), 268–300 (QAIL…SDYN), 335–368 (YKIS…YPQN), and 369–402 (AKAV…KKNP).

It belongs to the BBS4 family. As to quaternary structure, part of BBSome complex, that contains at least bbs-1, bbs-2, bbs-4, bbs-5, osm-12, bbs-8/ttc-8 and bbs-9. Interacts (via C-terminus) with bbs-5; the interaction is direct.

The protein resides in the cytoplasm. The protein localises to the cytoskeleton. It is found in the microtubule organizing center. It localises to the centrosome. Its subcellular location is the cell projection. The protein resides in the cilium membrane. Functionally, component of the BBSome complex. The BBSome complex is thought to function as a coat complex required for sorting of specific membrane proteins to the primary cilia. The BBSome complex is required for ciliogenesis but is dispensable for centriolar satellite function. Required for proper BBSome complex assembly and its ciliary localization. May be required for microtubule anchoring at the centrosome but not for microtubule nucleation. May be required for the dynein-mediated transport of pericentriolar proteins to the centrosome. Required, redundantly with bbs-5, for cilia biogenesis and both the assembly and movement of intraflagellar transport proteins along the ciliary axoneme. Plays a role in the removal of degraded mechanosensory receptors within the cilia. In Caenorhabditis elegans, this protein is BBSome complex member bbs-4.